Reading from the N-terminus, the 592-residue chain is Guanylate-binding protein 1 (592 aa).

The segment at 1 to 311 is GTPase domain (Globular); the sequence is MASEIHMTGP…NAISSGDLPC (311 aa). The GB1/RHD3-type G domain maps to 35 to 278; sequence TQPMVVVAIV…FCSYIFSNSK (244 aa). GTP-binding positions include 45–52, 67–69, and 97–101; these read GLYRTGKS, LGS, and DTEGL. Phosphoserine is present on Ser-156. Cys-589 is modified (cysteine methyl ester). Cys-589 carries S-farnesyl cysteine lipidation. Position 590 is a phosphothreonine (Thr-590). A propeptide spans 590-592 (removed in mature form); sequence TIS.

It belongs to the TRAFAC class dynamin-like GTPase superfamily. GB1/RHD3 GTPase family. GB1 subfamily. Homodimer; homodimerization occurs upon GTP-binding and is required for the second hydrolysis step from GDP to GMP. Undergoes conformational changes and oligomerization upon GTP-binding and hydrolysis. Heterodimer with other family members, including GBP2, GBP3, GBP4 and GBP5. Dimerization regulates subcellular location to membranous structures. Interacts with SQSTM1. Interacts (when phosphorylated) with 14-3-3 protein sigma (SFN); leading to GBP1 retention in the cytosol and inactivation. Isoprenylation is required for proper subcellular location. Post-translationally, phosphorylated at Ser-156 by PIM1 in absence of infection, inhibits GBP1: phosphorylation promotes interaction with 14-3-3 protein sigma (SFN), leading to GBP1 retention in the cytosol. Dephosphorylated in response to infection, liberating GBP1.

It is found in the cytoplasmic vesicle membrane. The protein localises to the golgi apparatus membrane. The protein resides in the cell membrane. It localises to the cytoplasm. Its subcellular location is the cytosol. It is found in the secreted. It catalyses the reaction GTP + H2O = GDP + phosphate + H(+). The enzyme catalyses GDP + H2O = GMP + phosphate + H(+). Interferon (IFN)-inducible GTPase that plays important roles in innate immunity against a diverse range of bacterial, viral and protozoan pathogens. Hydrolyzes GTP to GMP in two consecutive cleavage reactions: GTP is first hydrolyzed to GDP and then to GMP in a processive manner. Following infection, recruited to the pathogen-containing vacuoles or vacuole-escaped bacteria and promotes both inflammasome assembly and autophagy. Acts as a positive regulator of inflammasome assembly by facilitating the detection of inflammasome ligands from pathogens. Involved in the lysis of pathogen-containing vacuoles, releasing pathogens into the cytosol. Following pathogen release in the cytosol, forms a protein coat in a GTPase-dependent manner that encapsulates pathogens and promotes the detection of ligands by pattern recognition receptors. Plays a key role in inflammasome assembly in response to infection by Gram-negative bacteria: following pathogen release in the cytosol, forms a protein coat that encapsulates Gram-negative bacteria and directly binds to lipopolysaccharide (LPS), disrupting the O-antigen barrier and unmasking lipid A that is that detected by the non-canonical inflammasome effector CASP4/CASP11. Also promotes recruitment of proteins that mediate bacterial cytolysis, leading to release double-stranded DNA (dsDNA) that activates the AIM2 inflammasome. Involved in autophagy by regulating bacteriolytic peptide generation via its interaction with ubiquitin-binding protein SQSTM1, which delivers monoubiquitinated proteins to autolysosomes for the generation of bacteriolytic peptides. Confers protection to several pathogens, including the bacterial pathogens L.monocytogenes and M.bovis BCG as well as the protozoan pathogen T.gondii. Exhibits antiviral activity against influenza virus. The polypeptide is Guanylate-binding protein 1 (GBP1) (Pongo abelii (Sumatran orangutan)).